The primary structure comprises 242 residues: Probable transcriptional regulatory protein Bphy_2064 (242 aa).

Belongs to the TACO1 family.

The protein localises to the cytoplasm. This chain is Probable transcriptional regulatory protein Bphy_2064, found in Paraburkholderia phymatum (strain DSM 17167 / CIP 108236 / LMG 21445 / STM815) (Burkholderia phymatum).